The sequence spans 258 residues: Ribosomal RNA small subunit methyltransferase A (258 aa).

Histidine 13, leucine 15, glycine 40, glutamate 61, aspartate 86, and asparagine 106 together coordinate S-adenosyl-L-methionine.

This sequence belongs to the class I-like SAM-binding methyltransferase superfamily. rRNA adenine N(6)-methyltransferase family. RsmA subfamily.

It localises to the cytoplasm. The catalysed reaction is adenosine(1518)/adenosine(1519) in 16S rRNA + 4 S-adenosyl-L-methionine = N(6)-dimethyladenosine(1518)/N(6)-dimethyladenosine(1519) in 16S rRNA + 4 S-adenosyl-L-homocysteine + 4 H(+). In terms of biological role, specifically dimethylates two adjacent adenosines (A1518 and A1519) in the loop of a conserved hairpin near the 3'-end of 16S rRNA in the 30S particle. May play a critical role in biogenesis of 30S subunits. This chain is Ribosomal RNA small subunit methyltransferase A, found in Coxiella burnetii (strain RSA 331 / Henzerling II).